We begin with the raw amino-acid sequence, 408 residues long: Acetate kinase (408 aa).

Asn-10 is a Mg(2+) binding site. Lys-17 is a binding site for ATP. Arg-96 is a binding site for substrate. Asp-153 serves as the catalytic Proton donor/acceptor. ATP-binding positions include 213–217 (HLGNG) and 288–290 (DLR). Glu-393 provides a ligand contact to Mg(2+).

The protein belongs to the acetokinase family. As to quaternary structure, homodimer. The cofactor is Mg(2+). Mn(2+) is required as a cofactor.

It localises to the cytoplasm. The enzyme catalyses acetate + ATP = acetyl phosphate + ADP. It participates in metabolic intermediate biosynthesis; acetyl-CoA biosynthesis; acetyl-CoA from acetate: step 1/2. Its function is as follows. Catalyzes the formation of acetyl phosphate from acetate and ATP. Can also catalyze the reverse reaction. The sequence is that of Acetate kinase from Borrelia recurrentis (strain A1).